A 367-amino-acid polypeptide reads, in one-letter code: Uptake hydrogenase small subunit (367 aa).

The segment at residues 1–45 (MTPTETFYEVMRRQGVTRRSFLKFCSLTATALGLGPAYTSEIAHA) is a signal peptide (tat-type signal). Residues Cys62, Cys65, Cys160, Cys194, His232, Cys235, Cys260, and Cys266 each coordinate [4Fe-4S] cluster. [3Fe-4S] cluster-binding residues include Cys275, Cys294, and Cys297.

The protein belongs to the [NiFe]/[NiFeSe] hydrogenase small subunit family. Heterodimer of a large and a small subunit. Requires [4Fe-4S] cluster as cofactor. The cofactor is [3Fe-4S] cluster. Post-translationally, predicted to be exported by the Tat system. The position of the signal peptide cleavage has been experimentally proven.

It is found in the cell membrane. It carries out the reaction H2 + A = AH2. Its function is as follows. This enzyme recycles the H(2) produced by nitrogenase to increase the production of ATP and to protect nitrogenase against inhibition or damage by O(2) under carbon- or phosphate-limited conditions. The chain is Uptake hydrogenase small subunit (hoxS) from Afipia carboxidovorans (strain ATCC 49405 / DSM 1227 / KCTC 32145 / OM5) (Oligotropha carboxidovorans).